A 2057-amino-acid chain; its full sequence is Myosin heavy chain, non-muscle (2057 aa).

A Myosin N-terminal SH3-like domain is found at 78-128 (HRSVLVWVPHENQGFVAASIKREHGDEVEVELAETGKRVMILRDDIQKMNP). One can recognise a Myosin motor domain in the interval 132-867 (DKVEDMAELT…VLAHLEEERD (736 aa)). 225–232 (GESGAGKT) contacts ATP. The 25 kDa/50 kDa junction stretch occupies residues 250-260 (PKGSGAVPHPA). The interval 722–734 (DTQFGARTRKGMF) is 50 kDa/20 kDa junction. The segment at 745–767 (LAKLMDTLRNTNPNFVRCIIPNH) is actin-binding. The interval 782–798 (QLRCNGVLEGIRICRQG) is reactive sulfhydryl/actin-binding. In terms of domain architecture, IQ spans 870 to 899 (ISDLIVNFQAFCRGFLARRNYQKRLQQLNA). Residues 926-2016 (KPLLEVTKQE…SLKTKLRRTG (1091 aa)) are a coiled coil. 3 disordered regions span residues 1124 to 1144 (EERL…KRKI), 1782 to 1802 (SSER…EEIA), and 2008 to 2057 (LKTK…DSAN). The tract at residues 1343-2010 (SQIAELQVKL…MNREINSLKT (668 aa)) is alpha-helical tailpiece (LMM). The light meromyosin (LMM) stretch occupies residues 1343-2057 (SQIAELQVKL…ESLDGEDSAN (715 aa)). Residues 1782–1792 (SSERARRAAET) are compositionally biased toward basic and acidic residues. The tract at residues 2011 to 2057 (KLRRTGGIGLSSSRLTGTPSSKRAGGGGGSDDSSVQDESLDGEDSAN) is globular tailpiece. Phosphoserine occurs at positions 2021 and 2022. A compositionally biased stretch (acidic residues) spans 2044-2057 (SVQDESLDGEDSAN).

The protein belongs to the TRAFAC class myosin-kinesin ATPase superfamily. Myosin family. Interacts with sau. Interacts with ck and Ubr3. Post-translationally, ubiquitinated. In Johnston's organ, expressed in neurons and scolopale cells.

It localises to the cell projection. It is found in the cilium. Its subcellular location is the cytoplasm. Its function is as follows. Nonmuscle myosin appears to be responsible for cellularization. Required for morphogenesis and cytokinesis. Necessary for auditory transduction: plays a role in Johnston's organ organization by acting in scolopidial apical attachment. Interaction with the myosin ck may be important for this function. Localizes to and defines the trailing edge of cells during larval epidermal wound healing. This process is dependent on the phosphatidylinositol 4-phosphate 5-kinase sktl/skittles. This chain is Myosin heavy chain, non-muscle (zip), found in Drosophila melanogaster (Fruit fly).